The sequence spans 245 residues: Flavin-dependent thymidylate synthase (245 aa).

In terms of domain architecture, ThyX spans 5-210; the sequence is IKVRLVNYTK…ELRPIIRWAK (206 aa). Residues Ser-59, 83–85, and Gln-91 each bind FAD; that span reads RHR. DUMP contacts are provided by residues 80–83, 91–95, and Arg-149; these read QLVR and QQSMR. The short motif at 83–93 is the ThyX motif element; that stretch reads RHRIASYTQQS. FAD contacts are provided by residues 165-167 and His-171; that span reads NLR. Position 176 (Arg-176) interacts with dUMP. Arg-176 acts as the Involved in ionization of N3 of dUMP, leading to its activation in catalysis.

It belongs to the thymidylate synthase ThyX family. In terms of assembly, homotetramer. FAD serves as cofactor.

The enzyme catalyses dUMP + (6R)-5,10-methylene-5,6,7,8-tetrahydrofolate + NADPH + H(+) = dTMP + (6S)-5,6,7,8-tetrahydrofolate + NADP(+). It functions in the pathway pyrimidine metabolism; dTTP biosynthesis. Catalyzes the reductive methylation of 2'-deoxyuridine-5'-monophosphate (dUMP) to 2'-deoxythymidine-5'-monophosphate (dTMP) while utilizing 5,10-methylenetetrahydrofolate (mTHF) as the methyl donor, and NADPH and FADH(2) as the reductant. This is Flavin-dependent thymidylate synthase from Thermococcus onnurineus (strain NA1).